The sequence spans 874 residues: Alanine--tRNA ligase (874 aa).

Residues H562, H566, C664, and H668 each coordinate Zn(2+).

It belongs to the class-II aminoacyl-tRNA synthetase family. The cofactor is Zn(2+).

It is found in the cytoplasm. It catalyses the reaction tRNA(Ala) + L-alanine + ATP = L-alanyl-tRNA(Ala) + AMP + diphosphate. Its function is as follows. Catalyzes the attachment of alanine to tRNA(Ala) in a two-step reaction: alanine is first activated by ATP to form Ala-AMP and then transferred to the acceptor end of tRNA(Ala). Also edits incorrectly charged Ser-tRNA(Ala) and Gly-tRNA(Ala) via its editing domain. The polypeptide is Alanine--tRNA ligase (Neisseria meningitidis serogroup C (strain 053442)).